We begin with the raw amino-acid sequence, 278 residues long: Short-chain dehydrogenase RED2 (278 aa).

Residues Ile-15, Asp-70, Arg-132, Tyr-178, Lys-182, Val-211, and Thr-213 each contribute to the NADP(+) site. The Proton donor role is filled by Tyr-178. Lys-182 serves as the catalytic Lowers pKa of active site Tyr.

Belongs to the short-chain dehydrogenases/reductases (SDR) family.

Its pathway is polyketide biosynthesis. Its function is as follows. Short-chain dehydrogenase; part of the gene cluster that mediates the biosynthesis of pyriculol and pyriculariol, two heptaketides that induce lesion formation upon application on rice leaves but are dispensable for pathogenicity. The highly reducing polyketide synthase synthesizes the heptaketide backbone of pyriculol and pyriculariol. Pyriculol and pyriculariol contain several hydroxyl moieties and double bonds, so it can be assumed that several reduction steps occur during biosynthesis. These reactions could be executed by PKS19 itself or partly by the tailoring enzymes OXR1, OXR2, RED1, RED2 or RED3, identified within the cluster. The FAD-linked oxidoreductase OXR1 is the only tailoring enzyme for which the function has been determined yet, and is involved in the oxidation of dihydropyriculol and dihydropyriculariol into pyriculol and pyriculariol, respectively. The sequence is that of Short-chain dehydrogenase RED2 from Pyricularia oryzae (strain 70-15 / ATCC MYA-4617 / FGSC 8958) (Rice blast fungus).